We begin with the raw amino-acid sequence, 101 residues long: NADH-quinone oxidoreductase subunit K (101 aa).

The next 3 helical transmembrane spans lie at 4–24 (LSHY…GIFL), 30–50 (IILL…FVAF), and 61–81 (IFVF…LAIL).

Belongs to the complex I subunit 4L family. In terms of assembly, NDH-1 is composed of 14 different subunits. Subunits NuoA, H, J, K, L, M, N constitute the membrane sector of the complex.

Its subcellular location is the cell inner membrane. The enzyme catalyses a quinone + NADH + 5 H(+)(in) = a quinol + NAD(+) + 4 H(+)(out). Its function is as follows. NDH-1 shuttles electrons from NADH, via FMN and iron-sulfur (Fe-S) centers, to quinones in the respiratory chain. The immediate electron acceptor for the enzyme in this species is believed to be ubiquinone. Couples the redox reaction to proton translocation (for every two electrons transferred, four hydrogen ions are translocated across the cytoplasmic membrane), and thus conserves the redox energy in a proton gradient. The polypeptide is NADH-quinone oxidoreductase subunit K (Nitrosomonas eutropha (strain DSM 101675 / C91 / Nm57)).